The chain runs to 1465 residues: MSDLFAKLMDQIEMPLDMRRSSAFSSADIIEVKVHSVSRLWEFHFAFAAVLPIATYRELHDRLIRTFEAADIKVTFDIQAAQVDYSDDLLQAYYQEAFEHAPCNSASFKSSFSKLKVTYEDDKLIIAAPGFVNNDHFRNNHLPNLVKQFEAFGFGTLTIDMVSDQEMTEHLTKDFVSSRQALVKKAVQDNLEAQKSLEAMMPPVEEATPAPKFDYKERAAKRQAGFEKATITPMIEIETEENRIVFEGMVFDVERKTTRTGRHIINFKMTDYTSSFALQKWAKDDEELRKFDMIAKGAWLRVQGNIETNPFTKSLTMNVQQVKEIVHHERKDLMPEGQKRVELHAHTNMSTMDALPTVESLIDTAAKWGHKAVAITDHANVQSFPHGYHRARKAGIKAIFGLEANIVEDKVPISYDPVDMDLHEATYVVFDVETTGLSAMNNDLIQIAASKMFKGNIVEQFDEFIDPGHPLSAFTTELTGITDKHLQGAKPLVTVLKAFQDFCKDSILVAHNASFDVGFMNANYERHDLPKITQPVIDTLEFARNLYPEYKRHGLGPLTKRFQVSLDHHHMANYDAEATGRLLFIFLKDAREKHGIKNLLQLNTDLVAEDSYKKARIKHATIYVQNQVGLKNMFKLVSLSNIKYFEGVPRIPRTVLDAHREGLLLGTACSDGEVFDAVLTKGIDAAVDLAKYYDFIEIMPPAIYQPLVVRELIKDQAGIEQVIRDLIEVGKRANKLVLATGNVHYLEPEEEIYREIIVRSLGQGAMINRTIGRGEGAQPAPLPKAHFRTTNEMLDEFAFLGKDLAYQVVVENTQDFADRIEEVEVVKGDLYTPYIDKAEETVAELTYQKAFEIYGNPLPDIIDLRIEKELTSILGNGFAVIYLASQMLVNRSNERGYLVGSRGSVGSSFVATMIGITEVNPMPPHYVCPSCQHSEFITDGSVGSGYDLPNKPCPKCGTPYQKDGQDIPFETFLGFDGDKVPDIDLNFSGDDQPSAHLDVRDIFGAEYAFRAGTVGTVAEKTAYGFVKGYERDYGKFYRDAEVDRLAAGAAGVKRTTGQHPGGIVVIPNYMDVYDFTPVQYPADDVTASWQTTHFNFHDIDENVLKLDILGHDDPTMIRKLQDLSGIDPITIPADDPGVMALFSGTEVLGVTPEQIGTPTGMLGIPEFGTNFVRGMVNETHPTTFAELLQLSGLSHGTDVWLGNAQDLIKEGIATLKTVIGCRDDIMVYLMHAGLEPKMAFTIMERVRKGLWLKISEEERNGYIDAMRENNVPDWYIESCGKIKYMFPKAHAAAYVLMALRVAYFKVHHPIMYYCAYFSIRAKAFELKTMSGGLDAVKARMEDITIKRKNNEATNVENDLFTTLEIVNEMLERGFKFGKLDLYKSDAIEFQIKGDTLIPPFIALEGLGENVAKQIVKARQEGEFLSKMELRKRGGASSTLVEKMDEMGILGNMPEDNQLSLFDDFF.

An Exonuclease domain is found at Tyr-427–Leu-583.

It belongs to the DNA polymerase type-C family. PolC subfamily.

It localises to the cytoplasm. It catalyses the reaction DNA(n) + a 2'-deoxyribonucleoside 5'-triphosphate = DNA(n+1) + diphosphate. Functionally, required for replicative DNA synthesis. This DNA polymerase also exhibits 3' to 5' exonuclease activity. This chain is DNA polymerase III PolC-type, found in Streptococcus pyogenes serotype M4 (strain MGAS10750).